Here is a 370-residue protein sequence, read N- to C-terminus: Muconate cycloisomerase 1 (370 aa).

Residue Lys-166 is part of the active site. 3 residues coordinate Mn(2+): Asp-195, Glu-221, and Asp-246.

It belongs to the mandelate racemase/muconate lactonizing enzyme family. Homooctamer. Mn(2+) serves as cofactor.

The catalysed reaction is (S)-muconolactone = cis,cis-muconate + H(+). The protein operates within aromatic compound metabolism; beta-ketoadipate pathway; 5-oxo-4,5-dihydro-2-furylacetate from catechol: step 2/3. Functionally, catalyzes a syn cycloisomerization. In Acinetobacter baylyi (strain ATCC 33305 / BD413 / ADP1), this protein is Muconate cycloisomerase 1 (catB).